We begin with the raw amino-acid sequence, 452 residues long: Protein henna (452 aa).

Residues 36 to 107 form the ACT domain; it reads FSPKDSSLSS…EQCSYFNIIS (72 aa). S272 bears the Phosphoserine; by CaMK2 mark. Residues H284, H289, and E329 each contribute to the Fe cation site.

Belongs to the biopterin-dependent aromatic amino acid hydroxylase family. It depends on Fe(2+) as a cofactor. Phenylalanine hydrolase activity is found in yolk granules of embryos, and female abdomen and fat body tissues. Tryptophan hydroxylase is expressed in serotonergic neurons. Both enzymes are present in cuticular tissues.

The enzyme catalyses (6R)-L-erythro-5,6,7,8-tetrahydrobiopterin + L-phenylalanine + O2 = (4aS,6R)-4a-hydroxy-L-erythro-5,6,7,8-tetrahydrobiopterin + L-tyrosine. It catalyses the reaction (6R)-L-erythro-5,6,7,8-tetrahydrobiopterin + L-tryptophan + O2 = 5-hydroxy-L-tryptophan + (4aS,6R)-4a-hydroxy-L-erythro-5,6,7,8-tetrahydrobiopterin. Its pathway is amino-acid degradation; L-phenylalanine degradation; acetoacetate and fumarate from L-phenylalanine: step 1/6. Its activity is regulated as follows. N-terminal region of PAH is thought to contain allosteric binding sites for phenylalanine and to constitute an 'inhibitory' domain that regulates the activity of a catalytic domain in the C-terminal portion of the molecule. The sequence is that of Protein henna (Hn) from Drosophila melanogaster (Fruit fly).